Reading from the N-terminus, the 394-residue chain is ATP phosphoribosyltransferase regulatory subunit (394 aa).

It belongs to the class-II aminoacyl-tRNA synthetase family. HisZ subfamily. Heteromultimer composed of HisG and HisZ subunits.

The protein localises to the cytoplasm. It participates in amino-acid biosynthesis; L-histidine biosynthesis; L-histidine from 5-phospho-alpha-D-ribose 1-diphosphate: step 1/9. Functionally, required for the first step of histidine biosynthesis. May allow the feedback regulation of ATP phosphoribosyltransferase activity by histidine. The sequence is that of ATP phosphoribosyltransferase regulatory subunit from Saccharophagus degradans (strain 2-40 / ATCC 43961 / DSM 17024).